The sequence spans 341 residues: Probable long-chain-alcohol O-fatty-acyltransferase 9 (341 aa).

7 consecutive transmembrane segments (helical) span residues 9-29, 36-56, 82-102, 122-142, 146-166, 231-251, and 295-315; these read IIVW…SANI, LFSV…FSSV, GPLF…CFPI, FAIK…SHFL, VLLS…LGPL, MGYL…YFYI, and RLLT…PLFI.

This sequence belongs to the wax synthase family.

It is found in the membrane. The catalysed reaction is a long chain fatty alcohol + a fatty acyl-CoA = a wax ester + CoA. Catalyzes the final step in the synthesis of long-chain linear esters (waxes). This Arabidopsis thaliana (Mouse-ear cress) protein is Probable long-chain-alcohol O-fatty-acyltransferase 9.